The following is a 572-amino-acid chain: Proline--tRNA ligase (572 aa).

It belongs to the class-II aminoacyl-tRNA synthetase family. ProS type 1 subfamily. In terms of assembly, homodimer.

It localises to the cytoplasm. The enzyme catalyses tRNA(Pro) + L-proline + ATP = L-prolyl-tRNA(Pro) + AMP + diphosphate. Catalyzes the attachment of proline to tRNA(Pro) in a two-step reaction: proline is first activated by ATP to form Pro-AMP and then transferred to the acceptor end of tRNA(Pro). As ProRS can inadvertently accommodate and process non-cognate amino acids such as alanine and cysteine, to avoid such errors it has two additional distinct editing activities against alanine. One activity is designated as 'pretransfer' editing and involves the tRNA(Pro)-independent hydrolysis of activated Ala-AMP. The other activity is designated 'posttransfer' editing and involves deacylation of mischarged Ala-tRNA(Pro). The misacylated Cys-tRNA(Pro) is not edited by ProRS. The protein is Proline--tRNA ligase of Caldicellulosiruptor saccharolyticus (strain ATCC 43494 / DSM 8903 / Tp8T 6331).